A 249-amino-acid polypeptide reads, in one-letter code: Myelin protein P0 (249 aa).

A signal peptide spans 1–29 (MALGAIGDGRLLLLLVGLLSASGPSPTLA). An Ig-like V-type domain is found at 30–143 (IHVYTPREVY…DIVGKSSQVT (114 aa)). The Extracellular portion of the chain corresponds to 30–153 (IHVYTPREVY…LYVLEKVPTR (124 aa)). Cys-50 and Cys-127 are disulfide-bonded. Residue Asn-122 is glycosylated (N-linked (GlcNAc...) asparagine). A helical transmembrane segment spans residues 154 to 179 (YGVVLGSIIGGVLLLVALLVAVVYLV). The Cytoplasmic portion of the chain corresponds to 180–249 (RFCWLRRQAV…APGEARKDKK (70 aa)). Residues 227–249 (RSAKAAAEKKSKGAPGEARKDKK) are disordered.

Belongs to the myelin P0 protein family. Found only in peripheral nervous system Schwann cells.

Its subcellular location is the cell membrane. Is an adhesion molecule necessary for normal myelination in the peripheral nervous system. It mediates adhesion between adjacent myelin wraps and ultimately drives myelin compaction. This Gallus gallus (Chicken) protein is Myelin protein P0 (MPZ).